Here is an 84-residue protein sequence, read N- to C-terminus: Cell division topological specificity factor (84 aa).

This sequence belongs to the MinE family.

In terms of biological role, prevents the cell division inhibition by proteins MinC and MinD at internal division sites while permitting inhibition at polar sites. This ensures cell division at the proper site by restricting the formation of a division septum at the midpoint of the long axis of the cell. The sequence is that of Cell division topological specificity factor from Burkholderia multivorans (strain ATCC 17616 / 249).